We begin with the raw amino-acid sequence, 192 residues long: Ribosomal RNA small subunit methyltransferase G (192 aa).

Residues glycine 63, leucine 68, 112–113 (IE), and arginine 125 each bind S-adenosyl-L-methionine.

Belongs to the methyltransferase superfamily. RNA methyltransferase RsmG family.

It is found in the cytoplasm. It catalyses the reaction guanosine(527) in 16S rRNA + S-adenosyl-L-methionine = N(7)-methylguanosine(527) in 16S rRNA + S-adenosyl-L-homocysteine. Functionally, specifically methylates the N7 position of guanine in position 527 of 16S rRNA. The sequence is that of Ribosomal RNA small subunit methyltransferase G from Rickettsia rickettsii (strain Iowa).